The following is a 520-amino-acid chain: Ribonuclease Y (520 aa).

Residues 3–23 (IEIQWIGIGAAFLVGAIGGAL) traverse the membrane as a helical segment. The KH domain maps to 210–273 (AVSVVPLPND…EVARLALERL (64 aa)). The region spanning 336-429 (VLQHSIEVAF…VQAADALSGA (94 aa)) is the HD domain.

This sequence belongs to the RNase Y family.

Its subcellular location is the cell membrane. In terms of biological role, endoribonuclease that initiates mRNA decay. The sequence is that of Ribonuclease Y from Syntrophotalea carbinolica (strain DSM 2380 / NBRC 103641 / GraBd1) (Pelobacter carbinolicus).